Consider the following 206-residue polypeptide: MTNILIVTSSPRGPEGLSTRFATEIAEGLKTALGGTLSRRDLAANPPPHIAQAYIGGRVVGPETRTPEQAKAVGLAQELVDEVTAADVIVLGSGMINFGPSSQLKAWFDHITWPGVTFGYSAAGKPQGLLTGKKVYLVTASGGVFSEGDWAAFDFQTGYLRHLLSFIGLTDIQIIRVEGTVFGPEAAKAAIAATEAQVRAVLEKAA.

Residue Ser-10 coordinates FMN.

The protein belongs to the azoreductase type 1 family. As to quaternary structure, homodimer. FMN serves as cofactor.

It carries out the reaction 2 a quinone + NADH + H(+) = 2 a 1,4-benzosemiquinone + NAD(+). The catalysed reaction is N,N-dimethyl-1,4-phenylenediamine + anthranilate + 2 NAD(+) = 2-(4-dimethylaminophenyl)diazenylbenzoate + 2 NADH + 2 H(+). Quinone reductase that provides resistance to thiol-specific stress caused by electrophilic quinones. Functionally, also exhibits azoreductase activity. Catalyzes the reductive cleavage of the azo bond in aromatic azo compounds to the corresponding amines. The sequence is that of FMN-dependent NADH:quinone oxidoreductase 2 from Rhizobium etli (strain ATCC 51251 / DSM 11541 / JCM 21823 / NBRC 15573 / CFN 42).